An 87-amino-acid chain; its full sequence is Small ribosomal subunit protein uS15 (87 aa).

This sequence belongs to the universal ribosomal protein uS15 family. In terms of assembly, part of the 30S ribosomal subunit. Forms a bridge to the 50S subunit in the 70S ribosome, contacting the 23S rRNA.

In terms of biological role, one of the primary rRNA binding proteins, it binds directly to 16S rRNA where it helps nucleate assembly of the platform of the 30S subunit by binding and bridging several RNA helices of the 16S rRNA. Functionally, forms an intersubunit bridge (bridge B4) with the 23S rRNA of the 50S subunit in the ribosome. The protein is Small ribosomal subunit protein uS15 of Cutibacterium acnes (strain DSM 16379 / KPA171202) (Propionibacterium acnes).